The primary structure comprises 473 residues: N-lysine methyltransferase SETD6 (473 aa).

The residue at position 39 (lysine 39) is an N6-methylated lysine; by autocatalysis. One can recognise an SET domain in the interval 60-286; that stretch reads PPAQVAVSRQ…KGHEIFNTYG (227 aa). Residue 73–75 participates in S-adenosyl-L-methionine binding; the sequence is AGY. Substrate is bound at residue tryptophan 122. An N6-methylated lysine; by autocatalysis modification is found at lysine 179. Tyrosine 223 is a binding site for S-adenosyl-L-methionine. Serine 224 and glutamine 226 together coordinate substrate. Residue 251 to 252 participates in S-adenosyl-L-methionine binding; sequence NH. Tyrosine 262 and tyrosine 297 together coordinate substrate. Tyrosine 297 is an S-adenosyl-L-methionine binding site. At lysine 372 the chain carries N6-methylated lysine; by autocatalysis.

Belongs to the class V-like SAM-binding methyltransferase superfamily. Histone-lysine methyltransferase family. SETD6 subfamily. In terms of assembly, monomer, homodimer and homotrimer; these structures are stabilized in the presence of S-adenosyl-L-methionine (SAM). In terms of processing, automethylated; Lys-39 and Lys-179 serve as the major automethylation sites.

The protein localises to the nucleus. The catalysed reaction is L-lysyl-[protein] + S-adenosyl-L-methionine = N(6)-methyl-L-lysyl-[protein] + S-adenosyl-L-homocysteine + H(+). It catalyses the reaction L-lysyl(8)-[histone H2AZ] + S-adenosyl-L-methionine = N(6)-methyl-L-lysyl(8)-[histone H2AZ] + S-adenosyl-L-homocysteine + H(+). With respect to regulation, activated by automethylation. In terms of biological role, protein-lysine N-methyltransferase. Monomethylates 'Lys-310' of the RELA subunit of NF-kappa-B complex, leading to down-regulation of NF-kappa-B transcription factor activity. Monomethylates 'Lys-8' of H2AZ (H2AZK8me1). Required for the maintenance of embryonic stem cell self-renewal. Methylates PAK4. This is N-lysine methyltransferase SETD6 from Homo sapiens (Human).